A 296-amino-acid chain; its full sequence is Nicotinate dehydrogenase FAD-subunit (296 aa).

Residues 1–179 (MKDFEFFAPK…TEVIIDRPDA (179 aa)) enclose the FAD-binding PCMH-type domain. Residues 29-36 (IIAGGTDL), Gly101, 110-114 (TIGGN), Asp123, Arg160, Met169, and Lys187 contribute to the FAD site.

In terms of assembly, heterooctamer of NDHM, NDHL, NDHS and NDHF. Dimer of heterotetramers. FAD serves as cofactor.

It carries out the reaction nicotinate + NADP(+) + H2O = 6-hydroxynicotinate + NADPH + H(+). Its pathway is cofactor degradation; nicotinate degradation; 6-hydroxynicotinate from nicotinate: step 1/1. Its activity is regulated as follows. Reversibly inactivated by selenide and sulfide. Not inhibited by cyanide. Functionally, catalyzes the hydroxylation of nicotinate to 6-hydroxynicotinate. Also active against 2-pyrazinecarboxylic acid, but inactive against other nicotinate analogs. This is Nicotinate dehydrogenase FAD-subunit (ndhF) from Eubacterium barkeri (Clostridium barkeri).